A 197-amino-acid polypeptide reads, in one-letter code: RNA chaperone ProQ (197 aa).

A disordered region spans residues Arg-115–Glu-138. The span at Ala-117–Ala-131 shows a compositional bias: basic residues.

The protein belongs to the ProQ family.

The protein localises to the cytoplasm. Functionally, RNA chaperone with significant RNA binding, RNA strand exchange and RNA duplexing activities. The protein is RNA chaperone ProQ of Haemophilus influenzae (strain ATCC 51907 / DSM 11121 / KW20 / Rd).